The following is a 509-amino-acid chain: Maturase K (509 aa).

Belongs to the intron maturase 2 family. MatK subfamily.

It is found in the plastid. The protein localises to the chloroplast. In terms of biological role, usually encoded in the trnK tRNA gene intron. Probably assists in splicing its own and other chloroplast group II introns. The polypeptide is Maturase K (Nicotiana plumbaginifolia (Leadwort-leaved tobacco)).